A 572-amino-acid chain; its full sequence is Proline--tRNA ligase (572 aa).

It belongs to the class-II aminoacyl-tRNA synthetase family. ProS type 1 subfamily. In terms of assembly, homodimer.

It localises to the cytoplasm. The enzyme catalyses tRNA(Pro) + L-proline + ATP = L-prolyl-tRNA(Pro) + AMP + diphosphate. In terms of biological role, catalyzes the attachment of proline to tRNA(Pro) in a two-step reaction: proline is first activated by ATP to form Pro-AMP and then transferred to the acceptor end of tRNA(Pro). As ProRS can inadvertently accommodate and process non-cognate amino acids such as alanine and cysteine, to avoid such errors it has two additional distinct editing activities against alanine. One activity is designated as 'pretransfer' editing and involves the tRNA(Pro)-independent hydrolysis of activated Ala-AMP. The other activity is designated 'posttransfer' editing and involves deacylation of mischarged Ala-tRNA(Pro). The misacylated Cys-tRNA(Pro) is not edited by ProRS. This is Proline--tRNA ligase from Serratia proteamaculans (strain 568).